Here is a 237-residue protein sequence, read N- to C-terminus: Golgi to ER traffic protein 1 (237 aa).

Over 1–4 the chain is Lumenal; sequence MDSG. The chain crosses the membrane as a helical span at residues 5 to 24; the sequence is GWIVYCCIFFILLGKVLEYT. Topologically, residues 25-110 are cytoplasmic; the sequence is SSYQDKWFTK…SSKKVFGRVK (86 aa). Residues 40–99 adopt a coiled-coil conformation; the sequence is EARKLNSQYHELLSERLRLQEENHSISAQDNYARWTKNNRKLGELDKKLGTIRDKLQETN. Residues 111–131 form a helical membrane-spanning segment; sequence LIGLTIPFWILKIWQRSHVVY. Over 132–176 the chain is Lumenal; sequence HFPKQDLFPKLVTGVWARGWLYLALGPLQYLRNGSLNIQDYAPHG. Residues 177-193 traverse the membrane as a helical segment; the sequence is VSLGIWIWALQATINTL. Over 194-237 the chain is Cytoplasmic; the sequence is EFLVKQVILEKPVSPPPQKSKSATKAETKRPEKLEITDDKVELD. The segment at 205-237 is disordered; it reads PVSPPPQKSKSATKAETKRPEKLEITDDKVELD. The segment covering 217 to 237 has biased composition (basic and acidic residues); that stretch reads TKAETKRPEKLEITDDKVELD.

It belongs to the WRB/GET1 family. Component of the Golgi to ER traffic (GET) complex, which is composed of GET1, GET2 and GET3. Within the complex, GET1 and GET2 form a heterotetramer which is stabilized by phosphatidylinositol binding and which binds to the GET3 homodimer.

The protein resides in the endoplasmic reticulum membrane. The protein localises to the golgi apparatus membrane. Functionally, required for the post-translational delivery of tail-anchored (TA) proteins to the endoplasmic reticulum. Together with GET2, acts as a membrane receptor for soluble GET3, which recognizes and selectively binds the transmembrane domain of TA proteins in the cytosol. The GET complex cooperates with the HDEL receptor ERD2 to mediate the ATP-dependent retrieval of resident ER proteins that contain a C-terminal H-D-E-L retention signal from the Golgi to the ER. This chain is Golgi to ER traffic protein 1, found in Zygosaccharomyces rouxii (strain ATCC 2623 / CBS 732 / NBRC 1130 / NCYC 568 / NRRL Y-229).